We begin with the raw amino-acid sequence, 62 residues long: DNA-directed RNA polymerase subunit Rpo10 (62 aa).

The Zn(2+) site is built by Cys-6, Cys-9, Cys-43, and Cys-44.

The protein belongs to the archaeal Rpo10/eukaryotic RPB10 RNA polymerase subunit family. In terms of assembly, part of the RNA polymerase complex. Requires Zn(2+) as cofactor.

The protein resides in the cytoplasm. The enzyme catalyses RNA(n) + a ribonucleoside 5'-triphosphate = RNA(n+1) + diphosphate. Functionally, DNA-dependent RNA polymerase (RNAP) catalyzes the transcription of DNA into RNA using the four ribonucleoside triphosphates as substrates. The sequence is that of DNA-directed RNA polymerase subunit Rpo10 from Methanoregula boonei (strain DSM 21154 / JCM 14090 / 6A8).